The sequence spans 272 residues: uncharacterized protein (272 aa).

Residue K185 is the Schiff-base intermediate with substrate of the active site.

It belongs to the DeoC/FbaB aldolase family.

This is an uncharacterized protein from Saccharolobus solfataricus (strain ATCC 35092 / DSM 1617 / JCM 11322 / P2) (Sulfolobus solfataricus).